Here is a 518-residue protein sequence, read N- to C-terminus: MARAKTVKRDSVTHIYQTCKQAGTCPPDVINKVEQTTVADNILKYGSAGVFFGGLGISTGRGTGGATGYVPLGEGPGVRVGGTPTVVRPSLVPETIGPVDILPIDTVNPVEPTASSVVPLTESTGADLLPGEVETIAEIHPVPEGPSVDTPVVTTSTGSSAVLEVAPEPIPPTRVRVSRTQYHNPSFQIITESTPAQGESSLADHVLVTSGSGGQRIGGDITDIIELEEIPSRYTFEIEEPTPPRRSSTPLPRNQSVGRRRGFSLTNRRLVQQVQVDNPLFLTQPSKLVRFAFDNPVFEEEVTNIFENDLDVFEEPPDRDFLDVRELGRPQYSTTPAGYVRVSRLGTRATIRTRSGAQIGSQVHFYRDLSSINTEDPIELQLLGQHSGDATIVHGPVESTFIDMDISENPLSESIEAYSHDLLLDETVEDFSGSQLVIGNRRSTNSYTVPRFETTRNGSYYTQDTKGYYVAYPESRNNAEIIYPTPDIPVVIIHPHDSTGDFYLHPSLHRRKRKRKYL.

The Nuclear localization signal motif lies at 1 to 10 (MARAKTVKRD). An intrachain disulfide couples C19 to C25. The interval 237–262 (EIEEPTPPRRSSTPLPRNQSVGRRRG) is disordered. Residues 510–517 (RRKRKRKY) carry the Nuclear localization signal motif.

It belongs to the papillomaviridae L2 protein family. In terms of assembly, interacts with major capsid protein L1. Interacts with E2; this interaction inhibits E2 transcriptional activity but not the DNA replication function E2. Interacts with host GADD45GIP1. Interacts with host HSPA8; this interaction is required for L2 nuclear translocation. Interacts with host importins KPNB2 and KPNB3. Forms a complex with importin alpha2-beta1 heterodimers via interaction with the importin alpha2 adapter. Interacts with host DYNLT1; this interaction is essential for virus intracellular transport during entry. Interacts (via C-terminus) with host retromer subunits VPS35 and VPS29. Post-translationally, highly phosphorylated.

Its subcellular location is the virion. It is found in the host nucleus. It localises to the host early endosome. The protein resides in the host Golgi apparatus. Its function is as follows. Minor protein of the capsid that localizes along the inner surface of the virion, within the central cavities beneath the L1 pentamers. Plays a role in capsid stabilization through interaction with the major capsid protein L1. Once the virion enters the host cell, L2 escorts the genomic DNA into the nucleus by promoting escape from the endosomal compartments and traffic through the host Golgi network. Mechanistically, the C-terminus of L2 possesses a cell-penetrating peptide that protudes from the host endosome, interacts with host cytoplasmic retromer cargo and thereby mediates the capsid delivery to the host trans-Golgi network. Plays a role through its interaction with host dynein in the intracellular microtubule-dependent transport of viral capsid toward the nucleus. Mediates the viral genome import into the nucleus through binding to host importins. Once within the nucleus, L2 localizes viral genomes to host PML bodies in order to activate early gene expression for establishment of infection. Later on, promotes late gene expression by interacting with the viral E2 protein and by inhibiting its transcriptional activation functions. During virion assembly, encapsidates the genome by direct interaction with the viral DNA. This is Minor capsid protein L2 from Homo sapiens (Human).